The following is a 620-amino-acid chain: Guanylate cyclase soluble subunit beta-1 (620 aa).

A heme-binding site is contributed by histidine 105. One can recognise a Guanylate cyclase domain in the interval 421-554 (TILFSGIVGF…NTVNLTSRTE (134 aa)).

Belongs to the adenylyl cyclase class-4/guanylyl cyclase family. As to quaternary structure, the active enzyme is formed by a heterodimer of an alpha and a beta subunit. Heterodimer with GUCY1A1. Can also form inactive homodimers in vitro. It depends on heme as a cofactor.

Its subcellular location is the cytoplasm. The enzyme catalyses GTP = 3',5'-cyclic GMP + diphosphate. With respect to regulation, activated by nitric oxide in the presence of magnesium or manganese ions. Functionally, mediates responses to nitric oxide (NO) by catalyzing the biosynthesis of the signaling molecule cGMP. The protein is Guanylate cyclase soluble subunit beta-1 (Gucy1b1) of Mus musculus (Mouse).